The primary structure comprises 213 residues: Eukaryotic translation initiation factor isoform 4E (213 aa).

The tract at residues 1 to 37 (MATEVAAAVPPPQLDAEENSGLEAAAAEAKIQPSSGP) is disordered. Residues 56 to 61 (QGAAWG), Lys88, and 106 to 107 (WE) each bind mRNA. A disulfide bridge links Cys111 with Cys150. Residues 157–162 (RQRQDK) and 202–205 (KRER) contribute to the mRNA site.

Belongs to the eukaryotic initiation factor 4E family. EIF4F is a multi-subunit complex, the composition of which varies with external and internal environmental conditions. It is composed of at least EIF4A, EIF4E and EIF4G. EIF4E is also known to interact with other partners. In higher plants two isoforms of EIF4F have been identified, named isoform EIF4F and isoform EIF(iso)4F. Isoform EIF4F has subunits p220 and p26, whereas isoform EIF(iso)4F has subunits p82 and p28. In terms of assembly, (Microbial infection) Interacts with potyvirus viral genome-linked protein (VPg) of plum pox virus (PPV) strain D both in nucleus and cytoplasm; this interaction is possible in susceptible hosts but is impaired in resistant plants. Post-translationally, according to the redox status, the Cys-111-Cys-150 disulfide bridge may have a role in regulating protein function by affecting its ability to bind capped mRNA. In terms of tissue distribution, mostly expressed in leaves, flower buds, leaf buds and anthers, to a lower extent in roots, stems and green immature fruit, and, at low levels, in petals.

It is found in the cytoplasm. Its subcellular location is the nucleus. Component of the protein complex eIF4F, which is involved in the recognition of the mRNA cap, ATP-dependent unwinding of 5'-terminal secondary structure and recruitment of mRNA to the ribosome. Recognizes and binds the 7-methylguanosine-containing mRNA cap during an early step in the initiation of protein synthesis and facilitates ribosome binding by inducing the unwinding of the mRNAs secondary structures. Key component of recessive resistance to potyviruses such as the plum pox virus (PPV) strain D. Its function is as follows. (Microbial infection) Susceptibility host factor required for viral infection by recruiting viral RNAs to the host ribosomal complex via an interaction with viral genome-linked protein (VPg). The protein is Eukaryotic translation initiation factor isoform 4E of Prunus domestica (Garden plum).